The following is a 317-amino-acid chain: Acetyl-coenzyme A carboxylase carboxyl transferase subunit alpha (317 aa).

In terms of domain architecture, CoA carboxyltransferase C-terminal spans 41 to 291 (KVDKLLRSTY…SMALDSALRD (251 aa)).

Belongs to the AccA family. In terms of assembly, acetyl-CoA carboxylase is a heterohexamer composed of biotin carboxyl carrier protein (AccB), biotin carboxylase (AccC) and two subunits each of ACCase subunit alpha (AccA) and ACCase subunit beta (AccD).

Its subcellular location is the cytoplasm. It carries out the reaction N(6)-carboxybiotinyl-L-lysyl-[protein] + acetyl-CoA = N(6)-biotinyl-L-lysyl-[protein] + malonyl-CoA. It participates in lipid metabolism; malonyl-CoA biosynthesis; malonyl-CoA from acetyl-CoA: step 1/1. Component of the acetyl coenzyme A carboxylase (ACC) complex. First, biotin carboxylase catalyzes the carboxylation of biotin on its carrier protein (BCCP) and then the CO(2) group is transferred by the carboxyltransferase to acetyl-CoA to form malonyl-CoA. The polypeptide is Acetyl-coenzyme A carboxylase carboxyl transferase subunit alpha (Paramagnetospirillum magneticum (strain ATCC 700264 / AMB-1) (Magnetospirillum magneticum)).